The following is a 443-amino-acid chain: Ribosomal protein uS12 methylthiotransferase RimO (443 aa).

Residues 10–120 (PRVGFVSLGC…VMQAVHRHLP (111 aa)) enclose the MTTase N-terminal domain. 6 residues coordinate [4Fe-4S] cluster: C19, C55, C84, C151, C155, and C158. Residues 137–375 (LTPQHYAYLK…DFQEDISTQR (239 aa)) form the Radical SAM core domain. Residues 377 to 443 (EAKIGREMTV…IHDLYAERVV (67 aa)) form the TRAM domain.

This sequence belongs to the methylthiotransferase family. RimO subfamily. Requires [4Fe-4S] cluster as cofactor.

The protein resides in the cytoplasm. The enzyme catalyses L-aspartate(89)-[ribosomal protein uS12]-hydrogen + (sulfur carrier)-SH + AH2 + 2 S-adenosyl-L-methionine = 3-methylsulfanyl-L-aspartate(89)-[ribosomal protein uS12]-hydrogen + (sulfur carrier)-H + 5'-deoxyadenosine + L-methionine + A + S-adenosyl-L-homocysteine + 2 H(+). Its function is as follows. Catalyzes the methylthiolation of an aspartic acid residue of ribosomal protein uS12. This chain is Ribosomal protein uS12 methylthiotransferase RimO, found in Azoarcus sp. (strain BH72).